The sequence spans 255 residues: 1-acyl-sn-glycerol-3-phosphate acyltransferase (255 aa).

An HXXXXD motif motif is present at residues H78–D83.

The protein belongs to the 1-acyl-sn-glycerol-3-phosphate acyltransferase family.

It localises to the cell inner membrane. It carries out the reaction a 1-acyl-sn-glycero-3-phosphate + an acyl-CoA = a 1,2-diacyl-sn-glycero-3-phosphate + CoA. It participates in phospholipid metabolism; CDP-diacylglycerol biosynthesis; CDP-diacylglycerol from sn-glycerol 3-phosphate: step 2/3. Converts lysophosphatidic acid (LPA) into phosphatidic acid by incorporating acyl moiety at the 2 position. The chain is 1-acyl-sn-glycerol-3-phosphate acyltransferase (plsC) from Neisseria gonorrhoeae.